A 223-amino-acid polypeptide reads, in one-letter code: DNA mismatch repair protein MutH (223 aa).

It belongs to the MutH family.

It is found in the cytoplasm. In terms of biological role, sequence-specific endonuclease that cleaves unmethylated GATC sequences. It is involved in DNA mismatch repair. The protein is DNA mismatch repair protein MutH of Haemophilus influenzae (strain ATCC 51907 / DSM 11121 / KW20 / Rd).